A 176-amino-acid polypeptide reads, in one-letter code: Xanthine-guanine phosphoribosyltransferase (176 aa).

5-phospho-alpha-D-ribose 1-diphosphate-binding positions include 51–52 (RG), R88, and 111–119 (DDLVDSGKT). R88 contributes to the GMP binding site. D112 provides a ligand contact to Mg(2+). Residues D115 and I158 each coordinate guanine. Xanthine contacts are provided by D115 and I158. Residues 115–119 (DSGKT) and 157–158 (WI) contribute to the GMP site.

The protein belongs to the purine/pyrimidine phosphoribosyltransferase family. XGPT subfamily. As to quaternary structure, homotetramer. Requires Mg(2+) as cofactor.

The protein resides in the cell inner membrane. It carries out the reaction GMP + diphosphate = guanine + 5-phospho-alpha-D-ribose 1-diphosphate. It catalyses the reaction XMP + diphosphate = xanthine + 5-phospho-alpha-D-ribose 1-diphosphate. The catalysed reaction is IMP + diphosphate = hypoxanthine + 5-phospho-alpha-D-ribose 1-diphosphate. It functions in the pathway purine metabolism; GMP biosynthesis via salvage pathway; GMP from guanine: step 1/1. Its pathway is purine metabolism; XMP biosynthesis via salvage pathway; XMP from xanthine: step 1/1. Its function is as follows. Purine salvage pathway enzyme that catalyzes the transfer of the ribosyl-5-phosphate group from 5-phospho-alpha-D-ribose 1-diphosphate (PRPP) to the N9 position of the 6-oxopurines guanine and xanthine to form the corresponding ribonucleotides GMP (guanosine 5'-monophosphate) and XMP (xanthosine 5'-monophosphate), with the release of PPi. To a lesser extent, also acts on hypoxanthine. This Roseobacter denitrificans (strain ATCC 33942 / OCh 114) (Erythrobacter sp. (strain OCh 114)) protein is Xanthine-guanine phosphoribosyltransferase.